The following is a 133-amino-acid chain: Adenosine 5'-monophosphoramidase hnt1 (133 aa).

Positions 4 to 107 (IFCKIVKGDI…IPKPNEEYGL (104 aa)) constitute an HIT domain. AMP-binding positions include 29 to 30 (DI), Asn81, 87 to 89 (HQF), and 94 to 96 (HFH). Residues 92–96 (HVHFH) carry the Histidine triad motif motif. His94 acts as the Tele-AMP-histidine intermediate in catalysis.

It belongs to the HINT family. In terms of assembly, homodimer. Mg(2+) is required as a cofactor.

The protein resides in the nucleus. The catalysed reaction is adenosine 5'-phosphoramidate + H2O = AMP + NH4(+). Functionally, hydrolyzes adenosine 5'-monophosphoramidate substrates such as AMP-morpholidate, AMP-N-alanine methyl ester, AMP-alpha-acetyl lysine methyl ester and AMP-NH2. This chain is Adenosine 5'-monophosphoramidase hnt1 (hnt1), found in Schizosaccharomyces pombe (strain 972 / ATCC 24843) (Fission yeast).